The primary structure comprises 251 residues: Lactose phosphotransferase system repressor (251 aa).

An HTH deoR-type domain is found at 3 to 58 (KYDRLDEITKLVNKRGSVRTNEIVEDLNVSDMTVRRDLAELEEKGVLTKIHGGARS). The segment at residues 20 to 39 (VRTNEIVEDLNVSDMTVRRD) is a DNA-binding region (H-T-H motif).

Functionally, repressor of the lactose catabolism operon. Galactose-6-phosphate is the inducer. The sequence is that of Lactose phosphotransferase system repressor (lacR) from Staphylococcus epidermidis (strain ATCC 35984 / DSM 28319 / BCRC 17069 / CCUG 31568 / BM 3577 / RP62A).